Here is an 872-residue protein sequence, read N- to C-terminus: Coatomer subunit gamma-2 (872 aa).

6 HEAT repeats span residues 64–101 (MEAT…ISED), 283–320 (RELA…KHPS), 321–355 (AVTA…GSES), 356–392 (SVDR…KYPR), 395–430 (SVMM…ENPD), and 467–504 (PTPS…QNEP).

Belongs to the COPG family. In terms of assembly, oligomeric complex.

Its subcellular location is the cytoplasm. It localises to the golgi apparatus membrane. The protein localises to the cytoplasmic vesicle. The protein resides in the COPI-coated vesicle membrane. Functionally, the coatomer is a cytosolic protein complex that binds to dilysine motifs and reversibly associates with Golgi non-clathrin-coated vesicles, which further mediate biosynthetic protein transport from the ER, via the Golgi up to the trans Golgi network. Coatomer complex is required for budding from Golgi membranes, and is essential for the retrograde Golgi-to-ER transport of dilysine-tagged proteins. The sequence is that of Coatomer subunit gamma-2 (copg2) from Xenopus tropicalis (Western clawed frog).